Reading from the N-terminus, the 338-residue chain is Ribosomal RNA large subunit methyltransferase F (338 aa).

The disordered stretch occupies residues methionine 1–histidine 21.

The protein belongs to the methyltransferase superfamily. METTL16/RlmF family.

The protein localises to the cytoplasm. The catalysed reaction is adenosine(1618) in 23S rRNA + S-adenosyl-L-methionine = N(6)-methyladenosine(1618) in 23S rRNA + S-adenosyl-L-homocysteine + H(+). Its function is as follows. Specifically methylates the adenine in position 1618 of 23S rRNA. This Photobacterium profundum (strain SS9) protein is Ribosomal RNA large subunit methyltransferase F.